We begin with the raw amino-acid sequence, 241 residues long: Agamous-like MADS-box protein AP1 (241 aa).

Residues 1–61 (MGRGRVQLKR…GKLFEYSTDS (61 aa)) form the MADS-box domain. The K-box domain maps to 88–178 (QGNWSLEYSK…AKEIKEKEKT (91 aa)).

As to expression, expressed in tendrils and flowers.

Its subcellular location is the nucleus. Probable transcription factor involved in flower development. This chain is Agamous-like MADS-box protein AP1, found in Vitis vinifera (Grape).